The following is a 168-amino-acid chain: Pleiotrophin (168 aa).

The signal sequence occupies residues 1–32 (MQTPQYLQQRRKFAAAFLAFIFILAAVDTAEA). Cystine bridges form between cysteine 47/cysteine 76, cysteine 55/cysteine 85, cysteine 62/cysteine 89, cysteine 99/cysteine 131, and cysteine 109/cysteine 141. Chondroitin sulfate binding regions lie at residues 92-99 (KKQFGAEC) and 123-131 (KRALHNADC). The disordered stretch occupies residues 141–168 (CGKLTKSKPQAESKKKKKEGKKQEKMLD). The segment at 147 to 168 (SKPQAESKKKKKEGKKQEKMLD) is chondroitin sulfate A binding.

Interacts with ALK and NEK6. Interacts with PTPRZ1 (via chondroitin sulfate groups); promotes formation of homooligomers; oligomerization impairs tyrosine phosphatase activity. Forms a complex with PTPRZ1 and CTNNB1; this complex inactivates PTPRZ1 protein tyrosine phosphatase activity through PTN interaction and stimulates tyrosine phosphorylation of CTNNB1. Interacts with ITGB3 and ITGA5. Forms a complex with PTPRZ1 and integrin alpha-V/beta-3 (ITGAV:ITGB3) that stimulates endothelial cell migration through ITGB3 'Tyr-773' phosphorylation. Interacts with SDC3 (via heparan sulfate chains); this interaction mediates the neurite outgrowth-promoting signal from PTN to the cytoskeleton of growing neurites; this interaction mediates osteoblast recruitment. Interacts with GPC2 (via heparan sulfate); this interaction promotes neurite outgrowth through binding of PTN with chondroitin sulfate of proteoglycans, thereby releasing PTPRS of chondroitin sulfate proteoglycans (CSPGs) and leading to binding with heparan sulfate of GPC2. Post-translationally, phosphorylated by NEK6.

It is found in the secreted. Secreted growth factor that mediates its signal through cell-surface proteoglycan and non-proteoglycan receptors. Binds cell-surface proteoglycan receptor via their chondroitin sulfate (CS) groups. Thereby regulates many processes like cell proliferation, cell survival, cell growth, cell differentiation and cell migration in several tissues namely neuron and bone. Also plays a role in synaptic plasticity and learning-related behavior by inhibiting long-term synaptic potentiation. Binds PTPRZ1, leading to neutralization of the negative charges of the CS chains of PTPRZ1, inducing PTPRZ1 clustering, thereby causing the dimerization and inactivation of its phosphatase activity leading to increased tyrosine phosphorylation of each of the PTPRZ1 substrates like ALK, CTNNB1 or AFAP1L2 in order to activate the PI3K-AKT pathway. Through PTPRZ1 binding controls oligodendrocyte precursor cell differentiation by enhancing the phosphorylation of AFAP1L2 in order to activate the PI3K-AKT pathway. Forms a complex with PTPRZ1 and integrin alpha-V/beta-3 (ITGAV:ITGB3) that stimulates endothelial cell migration through SRC dephosphorylation and activation that consequently leads to ITGB3 'Tyr-773' phosphorylation. In adult hippocampus promotes dendritic arborization, spine development, and functional integration and connectivity of newborn granule neurons through ALK by activating AKT signaling pathway. Binds GPC2 and chondroitin sulfate proteoglycans (CSPGs) at the neuron surface, leading to abrogation of binding between PTPRS and CSPGs and neurite outgrowth promotion. Binds SDC3 and mediates bone formation by recruiting and attaching osteoblasts/osteoblast precursors to the sites for new bone deposition. Binds ALK and promotes cell survival and cell proliferation through MAPK pathway activation. Inhibits proliferation and enhances differentiation of neural stem cells by inhibiting FGF2-induced fibroblast growth factor receptor signaling pathway. Mediates regulatory mechanisms in normal hemostasis and in hematopoietic regeneration and in maintaining the balance of myeloid and lymphoid regeneration. In addition may play a role in the female reproductive system, auditory response and the progesterone-induced decidualization pathway. This is Pleiotrophin from Bos taurus (Bovine).